We begin with the raw amino-acid sequence, 140 residues long: Transcription antitermination protein NusB (140 aa).

Belongs to the NusB family.

Its function is as follows. Involved in transcription antitermination. Required for transcription of ribosomal RNA (rRNA) genes. Binds specifically to the boxA antiterminator sequence of the ribosomal RNA (rrn) operons. In Streptococcus pneumoniae (strain 70585), this protein is Transcription antitermination protein NusB.